The chain runs to 239 residues: 1-(5-phosphoribosyl)-5-[(5-phosphoribosylamino)methylideneamino] imidazole-4-carboxamide isomerase (239 aa).

D8 acts as the Proton acceptor in catalysis. The active-site Proton donor is D129.

This sequence belongs to the HisA/HisF family.

It is found in the cytoplasm. The catalysed reaction is 1-(5-phospho-beta-D-ribosyl)-5-[(5-phospho-beta-D-ribosylamino)methylideneamino]imidazole-4-carboxamide = 5-[(5-phospho-1-deoxy-D-ribulos-1-ylimino)methylamino]-1-(5-phospho-beta-D-ribosyl)imidazole-4-carboxamide. Its pathway is amino-acid biosynthesis; L-histidine biosynthesis; L-histidine from 5-phospho-alpha-D-ribose 1-diphosphate: step 4/9. The protein is 1-(5-phosphoribosyl)-5-[(5-phosphoribosylamino)methylideneamino] imidazole-4-carboxamide isomerase of Bacillus mycoides (strain KBAB4) (Bacillus weihenstephanensis).